We begin with the raw amino-acid sequence, 185 residues long: Large ribosomal subunit protein uL5 (185 aa).

It belongs to the universal ribosomal protein uL5 family. Part of the 50S ribosomal subunit; part of the 5S rRNA/L5/L18/L25 subcomplex. Contacts the 5S rRNA and the P site tRNA. Forms a bridge to the 30S subunit in the 70S ribosome.

Its function is as follows. This is one of the proteins that bind and probably mediate the attachment of the 5S RNA into the large ribosomal subunit, where it forms part of the central protuberance. In the 70S ribosome it contacts protein S13 of the 30S subunit (bridge B1b), connecting the 2 subunits; this bridge is implicated in subunit movement. Contacts the P site tRNA; the 5S rRNA and some of its associated proteins might help stabilize positioning of ribosome-bound tRNAs. In Bartonella henselae (strain ATCC 49882 / DSM 28221 / CCUG 30454 / Houston 1) (Rochalimaea henselae), this protein is Large ribosomal subunit protein uL5.